Reading from the N-terminus, the 134-residue chain is Transcriptional activator protein (134 aa).

The Nuclear localization signal motif lies at 17–31; the sequence is KVQHRIAKKTTRRRR. A zinc finger lies at 36 to 53; that stretch reads CGCSYFVALGCHNHGFTH. Residues 73–103 form a disordered region; it reads KSPVFQDNQTPRETISEEPRHNHNTSPIQLQ. Polar residues predominate over residues 75 to 85; the sequence is PVFQDNQTPRE. Positions 119-134 are transactivation; the sequence is NLDSFTSSDLAFLKSI.

Belongs to the geminiviridae transcriptional activator protein family. Monomer. Homodimer. Homooligomer. Self-interaction correlates with nuclear localization and efficient activation of transcription. Monomers suppress local silencing by interacting with and inactivating host adenosine kinase 2 (ADK2) in the cytoplasm. Interacts with and inhibits host SNF1 kinase. Binds to ssDNA. May interact with host RPS27A. Phosphorylated.

The protein localises to the host nucleus. Its subcellular location is the host cytoplasm. Multifunctional protein that modulates host antiviral defenses and promotes host attractiveness to insect vectors. Acts as a suppressor of RNA-mediated gene silencing, also known as post-transcriptional gene silencing (PTGS), a mechanism of plant viral defense that limits the accumulation of viral RNAs. TrAP suppresses the host RNA silencing by inhibiting adenosine kinase 2 (ADK2), a kinase involved in a general methylation pathway. Also suppresses the host basal defense by interacting with and inhibiting SNF1 kinase, a key regulator of cell metabolism implicated in innate antiviral defense. Functionally, inhibits signal transduction by the phytohormone jasmonate, making the infected plant more attractive to aphids, which are the second host to play a role as a dissemination vector. Acts by binding to ubiquitin precursor RPS27A, thereby preventing ubiquitin degradation of JAZ. The protein is Transcriptional activator protein of Tomato yellow leaf curl China virus (TYLCCNV).